An 86-amino-acid chain; its full sequence is Acyl carrier protein (86 aa).

One can recognise a Carrier domain in the interval 10–85; that stretch reads DKIEQKVIEM…DVIQYIKERQ (76 aa). An O-(pantetheine 4'-phosphoryl)serine modification is found at Ser-45.

The protein belongs to the acyl carrier protein (ACP) family. In terms of processing, 4'-phosphopantetheine is transferred from CoA to a specific serine of apo-ACP by AcpS. This modification is essential for activity because fatty acids are bound in thioester linkage to the sulfhydryl of the prosthetic group.

The protein localises to the cytoplasm. It participates in lipid metabolism; fatty acid biosynthesis. Its function is as follows. Carrier of the growing fatty acid chain in fatty acid biosynthesis. The chain is Acyl carrier protein from Rickettsia canadensis (strain McKiel).